The primary structure comprises 121 residues: Large ribosomal subunit protein bL12 (121 aa).

The protein belongs to the bacterial ribosomal protein bL12 family. As to quaternary structure, homodimer. Part of the ribosomal stalk of the 50S ribosomal subunit. Forms a multimeric L10(L12)X complex, where L10 forms an elongated spine to which 2 to 4 L12 dimers bind in a sequential fashion. Binds GTP-bound translation factors.

In terms of biological role, forms part of the ribosomal stalk which helps the ribosome interact with GTP-bound translation factors. Is thus essential for accurate translation. This Enterobacter sp. (strain 638) protein is Large ribosomal subunit protein bL12.